Here is a 128-residue protein sequence, read N- to C-terminus: Large ribosomal subunit protein bL17 (128 aa).

Belongs to the bacterial ribosomal protein bL17 family. Part of the 50S ribosomal subunit. Contacts protein L32.

This is Large ribosomal subunit protein bL17 from Streptococcus pneumoniae serotype 2 (strain D39 / NCTC 7466).